Reading from the N-terminus, the 151-residue chain is Methylglyoxal synthase (151 aa).

An MGS-like domain is found at 6–151 (RTMPAHKHVA…DYEAYLAERM (146 aa)). Residues H19, K23, 45-48 (TGTT), and 65-66 (SG) each bind substrate. Residue D71 is the Proton donor/acceptor of the active site. H98 contributes to the substrate binding site.

The protein belongs to the methylglyoxal synthase family.

The enzyme catalyses dihydroxyacetone phosphate = methylglyoxal + phosphate. Catalyzes the formation of methylglyoxal from dihydroxyacetone phosphate. The polypeptide is Methylglyoxal synthase (Vibrio parahaemolyticus serotype O3:K6 (strain RIMD 2210633)).